A 442-amino-acid chain; its full sequence is Putative zinc metalloprotease PM1991 (442 aa).

His-21 contributes to the Zn(2+) binding site. The active site involves Glu-22. His-25 is a Zn(2+) binding site. The helical transmembrane segment at 97-119 (AFVIAAGPIANFLFAILAYFTIY) threads the bilayer. The PDZ domain occupies 198–286 (DWRFDPEKES…FSFVVLTPEL (89 aa)). A run of 2 helical transmembrane segments spans residues 366-388 (IGLI…MNLF) and 418-440 (LSYR…NDFL).

The protein belongs to the peptidase M50B family. The cofactor is Zn(2+).

It is found in the cell inner membrane. This Pasteurella multocida (strain Pm70) protein is Putative zinc metalloprotease PM1991.